Consider the following 556-residue polypeptide: 2-succinyl-5-enolpyruvyl-6-hydroxy-3-cyclohexene-1-carboxylate synthase (556 aa).

It belongs to the TPP enzyme family. MenD subfamily. Homodimer. Mg(2+) serves as cofactor. Mn(2+) is required as a cofactor. It depends on thiamine diphosphate as a cofactor.

It catalyses the reaction isochorismate + 2-oxoglutarate + H(+) = 5-enolpyruvoyl-6-hydroxy-2-succinyl-cyclohex-3-ene-1-carboxylate + CO2. The protein operates within quinol/quinone metabolism; 1,4-dihydroxy-2-naphthoate biosynthesis; 1,4-dihydroxy-2-naphthoate from chorismate: step 2/7. Its pathway is quinol/quinone metabolism; menaquinone biosynthesis. Its function is as follows. Catalyzes the thiamine diphosphate-dependent decarboxylation of 2-oxoglutarate and the subsequent addition of the resulting succinic semialdehyde-thiamine pyrophosphate anion to isochorismate to yield 2-succinyl-5-enolpyruvyl-6-hydroxy-3-cyclohexene-1-carboxylate (SEPHCHC). This is 2-succinyl-5-enolpyruvyl-6-hydroxy-3-cyclohexene-1-carboxylate synthase from Staphylococcus haemolyticus (strain JCSC1435).